A 492-amino-acid chain; its full sequence is MSLEETLRSLSLDYLNLLINGQAFSDVTFQVEGRLVHAHRCILAARSLFFRKFFCGPDPPSGLDPIGGGSSRQPTVRPGVIPVNSVGYEVFLLLLQFLYSGQVSIVPQKHEPRPNCGERGCWHTHCTSAVDLALDTLAAARYFGVEQLALLTQKQLVSMVEKASIDDVMKVLIASRKQEMPQLWTTCSHLVAKSGLPPEILAKHLSIDVVAKIEELRLKSSLARRSLMPLHHHHHHHHHHDFGDLEDQKIRRMRRALDSSDVELVKLMVMGEGLNLDEALALHYAVENCSREVVKALLELGAADVNYPAGPAGKTSLHVAAEMVSPEMVAVLLDHHADPTVRTVDGVTPLDILRTLTSDFLFKGAVPGLNHIEPNKLRLCLELVQSAALVLSREENNASNNNNNNNNASSSAAPVYPPMSEDHSSSSSGNNNNNNNSIGNLNLDSRLVYLNLGATQMGGDDDNRHNNSHREAMNRQGGHGCDPSMYHHSHDF.

Residues 25–107 (SDVTFQVEGR…LYSGQVSIVP (83 aa)) enclose the BTB domain. The C2HC NPR-type zinc finger occupies 113–127 (RPNCGERGCWHTHCT). Cysteine 116, cysteine 121, histidine 123, and cysteine 126 together coordinate Zn(2+). ANK repeat units follow at residues 248–277 (QKIR…LNLD), 278–307 (EALA…DVNY), 312–341 (AGKT…DPTV), and 345–379 (DGVT…KLRL). Disordered regions lie at residues 395–439 (ENNA…NSIG) and 455–492 (TQMG…SHDF). Composition is skewed to low complexity over residues 397–413 (NASN…SSAA) and 425–439 (SSSS…NSIG). Residues 461–473 (DDNRHNNSHREAM) show a composition bias toward basic and acidic residues.

Belongs to the plant 'ANKYRIN-BTB/POZ' family. 'NOOT-BOP-COCH-like' (NBCL) subfamily. In terms of assembly, homodimer.

It is found in the nucleus. The protein localises to the cytoplasm. It localises to the cell membrane. Its pathway is protein modification; protein ubiquitination. In terms of biological role, may act as a substrate-specific adapter of an E3 ubiquitin-protein ligase complex (CUL3-RBX1-BTB) which mediates the ubiquitination and subsequent proteasomal degradation of target proteins. Transcriptional co-regulator involved in the promotion of leaf and floral meristem fate and determinacy. Required for the abscission of senescent organs, probably by regulating the cell wall disorganization in abscission zones (AZs, e.g. pulvini at the base of leaves). Involved in the coordination of the symbiotic nodule developmental program; promotes the formation of root nodules by interacting directly with APP1 to modulate the expression of the nuclear transcription factor Y subunit (NF-YA1), a key nodulin. Involved in the regulation of indeterminate nodule identity in association with NOOT1. The protein is BTB/POZ domain and ankyrin repeat-containing protein NOOT2 of Medicago truncatula (Barrel medic).